A 419-amino-acid chain; its full sequence is Testin (419 aa).

A PET domain is found at 92–199; that stretch reads MILTNPVAAK…GDVKLPSEMN (108 aa). Disordered regions lie at residues 133–164 and 199–222; these read EKQPVAGSEGAQYRKKQLAKQLPAHDQDPSKC and NAQGDKVHNPAGDRNTPAAVGSKD. The segment covering 155–164 has biased composition (basic and acidic residues); the sequence is PAHDQDPSKC. 3 consecutive LIM zinc-binding domains span residues 232–295, 297–357, and 360–419; these read YSCY…CDSE, PRCA…NHAV, and QGCH…KMMS.

The protein belongs to the prickle / espinas / testin family. As to quaternary structure, interacts via LIM domain 1 with ZYX. Interacts (via LIM domain 3) with ENAH and VASP. Interacts with ALKBH4, talin, actin, alpha-actinin, GRIP1 and PXN. Interacts (via LIM domain 2) with ACTL7A (via N-terminus). Heterodimer with ACTL7A; the heterodimer interacts with ENAH to form a heterotrimer.

It localises to the cytoplasm. The protein localises to the cell junction. Its subcellular location is the focal adhesion. Its function is as follows. Scaffold protein that may play a role in cell adhesion, cell spreading and in the reorganization of the actin cytoskeleton. Plays a role in the regulation of cell proliferation. May act as a tumor suppressor. This Rattus norvegicus (Rat) protein is Testin (Tes).